A 103-amino-acid polypeptide reads, in one-letter code: MAVQQKIRIKLKSYDHSLVDKWALKIIDVVKQTDAIIFGPIPLPTKTHVYTVNRSPHVDKKSREQFAFSSHKRLIEIINPTARTIDMLMKLELPSGVDVEIKS.

This sequence belongs to the universal ribosomal protein uS10 family. Part of the 30S ribosomal subunit.

In terms of biological role, involved in the binding of tRNA to the ribosomes. The sequence is that of Small ribosomal subunit protein uS10 from Chlorobaculum parvum (strain DSM 263 / NCIMB 8327) (Chlorobium vibrioforme subsp. thiosulfatophilum).